We begin with the raw amino-acid sequence, 269 residues long: Bis(5'-nucleosyl)-tetraphosphatase, symmetrical (269 aa).

It belongs to the Ap4A hydrolase family.

The catalysed reaction is P(1),P(4)-bis(5'-adenosyl) tetraphosphate + H2O = 2 ADP + 2 H(+). Functionally, hydrolyzes diadenosine 5',5'''-P1,P4-tetraphosphate to yield ADP. In Vibrio vulnificus (strain YJ016), this protein is Bis(5'-nucleosyl)-tetraphosphatase, symmetrical.